A 219-amino-acid chain; its full sequence is MEWEQIFHEIKEKYNFDKMDEILEKAYATQTVYPARENIYNAFKFTPFNDVKVVIIGQDPYHGPNQAHGLAFSVMDGTKLPPSLRNMYKELEDDLNIQRHTGELTGWAYEGVLLLNNVLTVVGGQAHSHKGIGWEQFTTEIVKAVSHYRENVVFILWGAPAQKLESLIDRSKHKVIKSVHPSPLSAYRGFFGSKPYSQTNEYLVAHNKTPIDWGREDIQ.

Asp-59 (proton acceptor) is an active-site residue.

This sequence belongs to the uracil-DNA glycosylase (UDG) superfamily. UNG family.

Its subcellular location is the cytoplasm. The catalysed reaction is Hydrolyzes single-stranded DNA or mismatched double-stranded DNA and polynucleotides, releasing free uracil.. In terms of biological role, excises uracil residues from the DNA which can arise as a result of misincorporation of dUMP residues by DNA polymerase or due to deamination of cytosine. This Macrococcus caseolyticus (strain JCSC5402) (Macrococcoides caseolyticum) protein is Uracil-DNA glycosylase.